Here is a 311-residue protein sequence, read N- to C-terminus: Probable manganese-dependent inorganic pyrophosphatase (311 aa).

Residues histidine 9, aspartate 13, aspartate 15, aspartate 77, histidine 99, and aspartate 151 each coordinate Mn(2+).

It belongs to the PPase class C family. It depends on Mn(2+) as a cofactor.

It is found in the cytoplasm. It carries out the reaction diphosphate + H2O = 2 phosphate + H(+). The polypeptide is Probable manganese-dependent inorganic pyrophosphatase (Streptococcus suis (strain 98HAH33)).